Reading from the N-terminus, the 149-residue chain is Large ribosomal subunit protein uL15 (149 aa).

Basic residues-rich tracts occupy residues 1–13 (MPTRLTKTRKHRG) and 21–42 (RIGKHRKHPGGRGKAGGQHHHR). The segment at 1–44 (MPTRLTKTRKHRGNVSAGKGRIGKHRKHPGGRGKAGGQHHHRTN) is disordered.

The protein belongs to the universal ribosomal protein uL15 family. Component of the large ribosomal subunit. Mature ribosomes consist of a small (40S) and a large (60S) subunit. The 40S subunit contains about 32 different proteins and 1 molecule of RNA (18S). The 60S subunit contains 45 different proteins and 3 molecules of RNA (25S, 5.8S and 5S).

Its subcellular location is the cytoplasm. In terms of biological role, component of the ribosome, a large ribonucleoprotein complex responsible for the synthesis of proteins in the cell. The small ribosomal subunit (SSU) binds messenger RNAs (mRNAs) and translates the encoded message by selecting cognate aminoacyl-transfer RNA (tRNA) molecules. The large subunit (LSU) contains the ribosomal catalytic site termed the peptidyl transferase center (PTC), which catalyzes the formation of peptide bonds, thereby polymerizing the amino acids delivered by tRNAs into a polypeptide chain. The nascent polypeptides leave the ribosome through a tunnel in the LSU and interact with protein factors that function in enzymatic processing, targeting, and the membrane insertion of nascent chains at the exit of the ribosomal tunnel. The sequence is that of Large ribosomal subunit protein uL15 from Candida albicans (strain SC5314 / ATCC MYA-2876) (Yeast).